The following is a 168-amino-acid chain: uncharacterized protein (168 aa).

Residues 1 to 10 (MSPTTGPQPN) show a composition bias toward pro residues. Disordered regions lie at residues 1–23 (MSPT…TGPQ) and 117–143 (EPGN…RGPQ).

This is an uncharacterized protein from Homo sapiens (Human).